A 268-amino-acid polypeptide reads, in one-letter code: Small ribosomal subunit protein eS1 (268 aa).

Residues 1–21 (MAVGKNKGLSKGGKKGGKKKV) form a disordered region.

This sequence belongs to the eukaryotic ribosomal protein eS1 family. In terms of assembly, component of the small ribosomal subunit. Mature ribosomes consist of a small (40S) and a large (60S) subunit. The 40S subunit contains about 33 different proteins and 1 molecule of RNA (18S). The 60S subunit contains about 49 different proteins and 3 molecules of RNA (28S, 5.8S and 5S).

The protein localises to the cytoplasm. Its function is as follows. Essential for oogenesis; required for late follicle cell development. The polypeptide is Small ribosomal subunit protein eS1 (Drosophila mojavensis (Fruit fly)).